We begin with the raw amino-acid sequence, 1099 residues long: Zinc finger protein basonuclin-2 (1099 aa).

Positions 45–66 are disordered; the sequence is EEAEVDVRERETQRDREPKRAR. Positions 49–66 are enriched in basic and acidic residues; it reads VDVRERETQRDREPKRAR. A Glycyl lysine isopeptide (Lys-Gly) (interchain with G-Cter in SUMO2) cross-link involves residue lysine 277. The segment at 357 to 385 is disordered; sequence LSTQNEYNESSESEVSPTPYKNDQTPNRN. Over residues 361–372 the composition is skewed to low complexity; sequence NEYNESSESEVS. A compositionally biased stretch (polar residues) spans 375-385; that stretch reads PYKNDQTPNRN. Glycyl lysine isopeptide (Lys-Gly) (interchain with G-Cter in SUMO2) cross-links involve residues lysine 396, lysine 416, and lysine 421. The interval 397 to 423 is disordered; that stretch reads TEPACVSPIQNSAPVSDLTKTEHPKSS. The C2H2-type 1 zinc finger occupies 441–464; it reads VFCNACGKTFYDKGTLKIHYNAVH. At serine 561 the chain carries Phosphoserine. Disordered stretches follow at residues 622–641 and 648–742; these read EPSA…MPVK and DTAD…EGDE. Lysine 641 participates in a covalent cross-link: Glycyl lysine isopeptide (Lys-Gly) (interchain with G-Cter in SUMO2). Positions 648–661 are enriched in acidic residues; that stretch reads DTADEFDDEDDDPN. Composition is skewed to basic and acidic residues over residues 670-680 and 719-742; these read MSHDNHCHSQE and ERDY…EGDE. Residues 833–856 form a C2H2-type 2 zinc finger; it reads KICYVCKKSFKSSYSVKLHYRNVH. Glycyl lysine isopeptide (Lys-Gly) (interchain with G-Cter in SUMO2) cross-links involve residues lysine 894 and lysine 919. 2 disordered regions span residues 929–948 and 968–1008; these read LDVR…HLNG and LQSS…KAEA. Over residues 982–995 the composition is skewed to acidic residues; it reads AGSDEGILLDDIDG. 2 C2H2-type zinc fingers span residues 1035–1058 and 1063–1090; these read IMCN…KTVH and HKCK…PNLH. The disordered stretch occupies residues 1079–1099; the sequence is SRNRHSQNPNLHKNIPFTSVD.

As to expression, highly expressed in testis, uterus and small intestine, and weakly expressed in colon and prostate. Also expressed in skin, primary keratinocytes, immortalized keratinocytes, and HeLa and HEK293 cells. Not detected in blood, thymus, spleen or Hep-G2 cells.

The protein localises to the nucleus. Functionally, probable transcription factor specific for skin keratinocytes. May play a role in the differentiation of spermatozoa and oocytes. May also play an important role in early urinary-tract development. In Homo sapiens (Human), this protein is Zinc finger protein basonuclin-2.